The chain runs to 152 residues: Transcriptional regulator MraZ (152 aa).

SpoVT-AbrB domains are found at residues 5-52 and 81-124; these read ATLV…PLPE and ASEC…DETT.

Belongs to the MraZ family. In terms of assembly, forms oligomers.

The protein resides in the cytoplasm. Its subcellular location is the nucleoid. In terms of biological role, negatively regulates its own expression and that of the subsequent genes in the proximal part of the division and cell wall (dcw) gene cluster. Acts by binding directly to DNA. May also regulate the expression of genes outside the dcw cluster. The chain is Transcriptional regulator MraZ from Shigella sonnei (strain Ss046).